Reading from the N-terminus, the 471-residue chain is Phosphatidylinositol 4-kinase type 2-alpha (471 aa).

Disordered regions lie at residues 1 to 25 (MDET…QCSP) and 48 to 101 (PGSA…PDDP). Residues 90–101 (AERERNKFPDDP) are compositionally biased toward basic and acidic residues. A PI3K/PI4K catalytic domain is found at 117–445 (DILPERISQG…VQTPPVIVET (329 aa)). Residues 123 to 129 (ISQGSSG) are G-loop. ATP contacts are provided by residues 124–130 (SQGSSGS) and K145. Residues 150-152 (EPY) form an important for substrate binding region. The segment at 158–171 (KWTKWLQKLCCPCC) is important for interaction with membranes. S-palmitoyl cysteine attachment occurs at residues C167, C168, C170, and C171. 254 to 257 (QLFV) contacts ATP. An important for interaction with membranes region spans residues 261–269 (KDADYWLRR). The segment at 298-306 (RNTDRGNDN) is catalytic loop. The interval 336–356 (AIDNGLAFPLKHPDSWRAYPF) is activation loop. D338 lines the ATP pocket. An important for interaction with membranes region spans residues 351–360 (WRAYPFYWAW).

It belongs to the PI3/PI4-kinase family. Type II PI4K subfamily.

It localises to the golgi apparatus. It is found in the trans-Golgi network membrane. Its subcellular location is the membrane raft. The protein localises to the endosome. The protein resides in the endosome membrane. It localises to the cytoplasmic vesicle. It is found in the cell projection. Its subcellular location is the dendrite. The protein localises to the presynaptic cell membrane. The protein resides in the synapse. It localises to the synaptosome. It is found in the mitochondrion. Its subcellular location is the membrane. The protein localises to the cell membrane. The protein resides in the perikaryon. It localises to the neuron projection. It carries out the reaction a 1,2-diacyl-sn-glycero-3-phospho-(1D-myo-inositol) + ATP = a 1,2-diacyl-sn-glycero-3-phospho-(1D-myo-inositol 4-phosphate) + ADP + H(+). Membrane-bound phosphatidylinositol-4 kinase (PI4-kinase) that catalyzes the phosphorylation of phosphatidylinositol (PI) to phosphatidylinositol 4-phosphate (PI4P), a lipid that plays important roles in endocytosis, Golgi function, protein sorting and membrane trafficking. Besides, phosphorylation of phosphatidylinositol (PI) to phosphatidylinositol 4-phosphate (PI4P) is the first committed step in the generation of phosphatidylinositol 4,5-bisphosphate (PIP2), a precursor of the second messenger inositol 1,4,5-trisphosphate (InsP3). The polypeptide is Phosphatidylinositol 4-kinase type 2-alpha (pi4k2a) (Xenopus tropicalis (Western clawed frog)).